The primary structure comprises 345 residues: Holliday junction branch migration complex subunit RuvB (345 aa).

The large ATPase domain (RuvB-L) stretch occupies residues 1–186 (MSTDPDEREV…FGFTAHMDFY (186 aa)). Residues L25, R26, G67, K70, T71, S72, 133–135 (EDF), R176, Y186, and R223 contribute to the ATP site. Mg(2+) is bound at residue T71. Residues 187–257 (EPAELERVLV…VAKAALAVYD (71 aa)) form a small ATPAse domain (RuvB-S) region. The segment at 260–345 (ELGLDRLDRA…AGANQPGLFE (86 aa)) is head domain (RuvB-H). DNA is bound by residues R315 and R320.

This sequence belongs to the RuvB family. Homohexamer. Forms an RuvA(8)-RuvB(12)-Holliday junction (HJ) complex. HJ DNA is sandwiched between 2 RuvA tetramers; dsDNA enters through RuvA and exits via RuvB. An RuvB hexamer assembles on each DNA strand where it exits the tetramer. Each RuvB hexamer is contacted by two RuvA subunits (via domain III) on 2 adjacent RuvB subunits; this complex drives branch migration. In the full resolvosome a probable DNA-RuvA(4)-RuvB(12)-RuvC(2) complex forms which resolves the HJ.

Its subcellular location is the cytoplasm. It carries out the reaction ATP + H2O = ADP + phosphate + H(+). Its function is as follows. The RuvA-RuvB-RuvC complex processes Holliday junction (HJ) DNA during genetic recombination and DNA repair, while the RuvA-RuvB complex plays an important role in the rescue of blocked DNA replication forks via replication fork reversal (RFR). RuvA specifically binds to HJ cruciform DNA, conferring on it an open structure. The RuvB hexamer acts as an ATP-dependent pump, pulling dsDNA into and through the RuvAB complex. RuvB forms 2 homohexamers on either side of HJ DNA bound by 1 or 2 RuvA tetramers; 4 subunits per hexamer contact DNA at a time. Coordinated motions by a converter formed by DNA-disengaged RuvB subunits stimulates ATP hydrolysis and nucleotide exchange. Immobilization of the converter enables RuvB to convert the ATP-contained energy into a lever motion, pulling 2 nucleotides of DNA out of the RuvA tetramer per ATP hydrolyzed, thus driving DNA branch migration. The RuvB motors rotate together with the DNA substrate, which together with the progressing nucleotide cycle form the mechanistic basis for DNA recombination by continuous HJ branch migration. Branch migration allows RuvC to scan DNA until it finds its consensus sequence, where it cleaves and resolves cruciform DNA. The sequence is that of Holliday junction branch migration complex subunit RuvB from Mycobacterium marinum (strain ATCC BAA-535 / M).